A 477-amino-acid chain; its full sequence is Glycogen synthase (477 aa).

Lys15 lines the ADP-alpha-D-glucose pocket.

The protein belongs to the glycosyltransferase 1 family. Bacterial/plant glycogen synthase subfamily.

The catalysed reaction is [(1-&gt;4)-alpha-D-glucosyl](n) + ADP-alpha-D-glucose = [(1-&gt;4)-alpha-D-glucosyl](n+1) + ADP + H(+). It participates in glycan biosynthesis; glycogen biosynthesis. Functionally, synthesizes alpha-1,4-glucan chains using ADP-glucose. The polypeptide is Glycogen synthase (Shigella sonnei (strain Ss046)).